Reading from the N-terminus, the 64-residue chain is OPG024 protein (64 aa).

Residues 1–64 (MSSKGGSSGG…GGVKSGTGKI (64 aa)) form a disordered region. The segment covering 23–34 (NKGSKTYTSSGS) has biased composition (low complexity). Gly residues predominate over residues 49–64 (VNGGVNGGVKSGTGKI).

This sequence belongs to the orthopoxvirus OPG024 family.

The protein is OPG024 protein (OPG023) of Cynomys gunnisoni (Gunnison's prairie dog).